A 294-amino-acid polypeptide reads, in one-letter code: Elongation factor Ts (294 aa).

Residues 82–85 (TDFV) form an involved in Mg(2+) ion dislocation from EF-Tu region.

It belongs to the EF-Ts family.

The protein resides in the cytoplasm. Functionally, associates with the EF-Tu.GDP complex and induces the exchange of GDP to GTP. It remains bound to the aminoacyl-tRNA.EF-Tu.GTP complex up to the GTP hydrolysis stage on the ribosome. The polypeptide is Elongation factor Ts (Psychrobacter cryohalolentis (strain ATCC BAA-1226 / DSM 17306 / VKM B-2378 / K5)).